The chain runs to 335 residues: Glycerol-3-phosphate dehydrogenase [NAD(P)+] (335 aa).

4 residues coordinate NADPH: serine 15, tyrosine 16, histidine 36, and lysine 110. Residues lysine 110, glycine 139, and threonine 141 each coordinate sn-glycerol 3-phosphate. Residue alanine 143 coordinates NADPH. Residues lysine 195, aspartate 248, serine 258, arginine 259, and asparagine 260 each coordinate sn-glycerol 3-phosphate. The active-site Proton acceptor is lysine 195. Arginine 259 serves as a coordination point for NADPH. 2 residues coordinate NADPH: valine 283 and glutamate 285.

The protein belongs to the NAD-dependent glycerol-3-phosphate dehydrogenase family.

The protein localises to the cytoplasm. It catalyses the reaction sn-glycerol 3-phosphate + NAD(+) = dihydroxyacetone phosphate + NADH + H(+). The catalysed reaction is sn-glycerol 3-phosphate + NADP(+) = dihydroxyacetone phosphate + NADPH + H(+). Its pathway is membrane lipid metabolism; glycerophospholipid metabolism. Its function is as follows. Catalyzes the reduction of the glycolytic intermediate dihydroxyacetone phosphate (DHAP) to sn-glycerol 3-phosphate (G3P), the key precursor for phospholipid synthesis. The sequence is that of Glycerol-3-phosphate dehydrogenase [NAD(P)+] from Mannheimia succiniciproducens (strain KCTC 0769BP / MBEL55E).